Consider the following 366-residue polypeptide: Ribosomal RNA large subunit methyltransferase M (366 aa).

S-adenosyl-L-methionine-binding positions include Ser188, 221–224 (CPGG), Asp240, Asp260, and Asp277. Lys306 (proton acceptor) is an active-site residue.

Belongs to the class I-like SAM-binding methyltransferase superfamily. RNA methyltransferase RlmE family. RlmM subfamily. In terms of assembly, monomer.

The protein localises to the cytoplasm. It carries out the reaction cytidine(2498) in 23S rRNA + S-adenosyl-L-methionine = 2'-O-methylcytidine(2498) in 23S rRNA + S-adenosyl-L-homocysteine + H(+). In terms of biological role, catalyzes the 2'-O-methylation at nucleotide C2498 in 23S rRNA. The sequence is that of Ribosomal RNA large subunit methyltransferase M from Salmonella dublin (strain CT_02021853).